Here is a 315-residue protein sequence, read N- to C-terminus: THO complex subunit 3 (315 aa).

WD repeat units lie at residues 18-57 (GHKKKVHSVAWNSNGTKLASGSVDQTARIWNIEPHGHSKA), 64-104 (GHTD…CTQQ), 106-145 (ELSGENINITYKPDGTHVAVGNRDDELTILDVRKFKPLHR), 189-228 (AHTAGCYCIAIDPKGRYFAVGSADSLVSLWDISDMLCLRT), 231-270 (KLEWPVRTISFNYSGEYIASASEDLFIDIANVQTGRTVHQ), and 272-311 (PCRAAMNSVEWNPKYNLLAYAGDDKNPKYNTDEGVFRIFG).

It belongs to the THOC3 family. As to quaternary structure, component of the THO complex, which is composed of THO1, THO2, THO3, THO5, THO6 and THO7.

The protein resides in the nucleus. Acts as a component of the THO subcomplex of the TREX complex which is thought to couple mRNA transcription, processing and nuclear export. Contributes to the integrity of the endogenous trans-acting small interfering RNA (ta-siRNA) pathway. May process or transport a long RNA molecule so that it can be a template for secondary siRNA production. May participate in the trafficking of siRNA precursors to the ARGONAUTE catalytic center. Required for the generation of functional messenger ribonucleoproteins (mRNPs). This chain is THO complex subunit 3 (THO3), found in Arabidopsis thaliana (Mouse-ear cress).